The sequence spans 130 residues: Flagellar assembly factor FliW (130 aa).

It belongs to the FliW family. In terms of assembly, interacts with translational regulator CsrA and flagellin(s).

It is found in the cytoplasm. In terms of biological role, acts as an anti-CsrA protein, binds CsrA and prevents it from repressing translation of its target genes, one of which is flagellin. Binds to flagellin and participates in the assembly of the flagellum. This chain is Flagellar assembly factor FliW, found in Borreliella burgdorferi (strain ATCC 35210 / DSM 4680 / CIP 102532 / B31) (Borrelia burgdorferi).